The primary structure comprises 272 residues: Regulatory protein RecX (272 aa).

This sequence belongs to the RecX family.

The protein localises to the cytoplasm. Functionally, modulates RecA activity. In Staphylococcus saprophyticus subsp. saprophyticus (strain ATCC 15305 / DSM 20229 / NCIMB 8711 / NCTC 7292 / S-41), this protein is Regulatory protein RecX.